Here is a 696-residue protein sequence, read N- to C-terminus: MTRLGWGRRMVFGAALAAVAILGACNGDESAERNRLPGFVSGSVRTTAYDGASDDLLTAGLGKTGLGSASAPGFANAARPTSAELRRLAIWSNYRALVDMSANGGYGRFWGPNVDLDGNDTLGEGKIPGTEYLAYSDDGSGSKNVTLLVQVPAGFNPAQPCIVTATSSGSRGVYGAISAAGEWALKRGCAVAYNDKGGGNGAHELMSDTITLIDGTLANAVLAGTSSLFTANVTSGDLATFNSRFPNRYAFKHAHSQQNPEQDWGHVTLQSVEFAYWALNEQFGPLIDGSRHGVRYRAGDIMTIAASVSNGGGASLAAAEQDTRGWITAVVVGEPQINVRMAPNVVVRSGGQPVPSFGRPLADYATLANLLEPCAAASASLAGAPYLSALPVATTQSIRTQRCATLAAAGLVSGADTQSQAADALAQLHAAGYLADSDLLQAPMWDSQAIPAIAVTYANAYTRSRVTDNLCNFSFATTNPATGAVAAPATSPMPAVFGVGNGVPPTAGIDLVFNTGAGVDHRLATPDASFAGALCLRQLWTNGMLGMPANVDAVRVNANLQGKPAIIVQGRSDSLVPVNHASRAYVAQNGISEAGRSQLVFYEVTNGQHFDAFLPVPGFDTRFVPVHYYNLQALNLMWKHLKNGAPLPPSQVIRTVPRGGTPGAAPALTSANLPPISAAPGANAITVGAGAIDVPL.

The signal sequence occupies residues 1-20 (MTRLGWGRRMVFGAALAAVA). Serine 309 acts as the Charge relay system in catalysis.

It belongs to the D-(-)-3-hydroxybutyrate oligomer hydrolase family.

The protein localises to the secreted. It catalyses the reaction (3R)-hydroxybutanoate dimer + H2O = 2 (R)-3-hydroxybutanoate + H(+). The protein operates within lipid metabolism; butanoate metabolism. Its function is as follows. Participates in the degradation of poly-3-hydroxybutyrate (PHB). It works downstream of poly(3-hydroxybutyrate) depolymerase, hydrolyzing D(-)-3-hydroxybutyrate oligomers of various length (3HB-oligomers) into 3HB-monomers. The sequence is that of D-(-)-3-hydroxybutyrate oligomer hydrolase from Burkholderia lata (strain ATCC 17760 / DSM 23089 / LMG 22485 / NCIMB 9086 / R18194 / 383).